The sequence spans 370 residues: GTPase Obg (370 aa).

The 159-residue stretch at 1–159 folds into the Obg domain; that stretch reads MKFIDEARIE…RMLKLELKVL (159 aa). Residues 128-147 form a disordered region; sequence LHFKSSTNRAPRQKTDGKPG. Residues 160–334 form the OBG-type G domain; sequence ADVGLLGMPN…LCYAIYDYLS (175 aa). GTP-binding positions include 166–173, 191–195, 213–216, 284–287, and 315–317; these read GMPNAGKS, FTTLA, DIPG, NKLD, and SAL. Mg(2+) is bound by residues Ser173 and Thr193.

This sequence belongs to the TRAFAC class OBG-HflX-like GTPase superfamily. OBG GTPase family. Monomer. Requires Mg(2+) as cofactor.

It localises to the cytoplasm. Functionally, an essential GTPase which binds GTP, GDP and possibly (p)ppGpp with moderate affinity, with high nucleotide exchange rates and a fairly low GTP hydrolysis rate. Plays a role in control of the cell cycle, stress response, ribosome biogenesis and in those bacteria that undergo differentiation, in morphogenesis control. This chain is GTPase Obg, found in Burkholderia cenocepacia (strain ATCC BAA-245 / DSM 16553 / LMG 16656 / NCTC 13227 / J2315 / CF5610) (Burkholderia cepacia (strain J2315)).